The chain runs to 1461 residues: Calmodulin-regulated spectrin-associated protein 2 (1461 aa).

Residues 211–324 (PGGQKARYRK…FMAELFWWFE (114 aa)) enclose the Calponin-homology (CH) domain. The segment at 361–389 (RDSSSSSDFSSRYTRPQTHSSASGGIRRS) is disordered. 2 stretches are compositionally biased toward low complexity: residues 362–371 (DSSSSSDFSS) and 380–389 (SSASGGIRRS). 2 positions are modified to phosphoserine: S391 and S393. T401 is modified (phosphothreonine). A phosphoserine mark is found at S439, S572, S573, S585, and S647. Disordered regions lie at residues 573–613 (SPDN…EDSS) and 639–704 (ASNP…GSEL). Position 652 is a phosphothreonine (T652). Residue S654 is modified to Phosphoserine. Residues 654–673 (STKSQPGSSASSSSGVKMTS) are compositionally biased toward low complexity. Positions 677–687 (QKFRKLNHTDG) are enriched in basic and acidic residues. Residues 730–767 (LLASEMVHLRMRLEEKRRAIEAQKKKMEAAFTKQRQKM) adopt a coiled-coil conformation. The segment covering 787–826 (REEAAGAEDEKVYTDRAKERESQKMDGQRSKSLADIKESM) has biased composition (basic and acidic residues). The tract at residues 787–855 (REEAAGAEDE…QWNLTSPSEE (69 aa)) is disordered. S836 carries the post-translational modification Phosphoserine. A coiled-coil region spans residues 861–900 (EILEYTKSIEKLNSSLHFLQQEMQRLSLQQEMLMQMREQQ). The interval 896-1007 (MREQQAWVIS…IQTRSFVCFG (112 aa)) is MBD region. Phosphoserine is present on residues S905 and S910. Disordered regions lie at residues 921-992 (RQAG…RRFS), 1004-1044 (VCFG…GEKE), 1069-1090 (NEDQLSQPTEPPPKPVFPPTAP), 1102-1124 (DLKPPEKADVSVEKLDGESDKEQ), and 1163-1321 (KETQ…EYTG). The segment covering 926 to 937 (SSAAAPFSSDSP) has biased composition (low complexity). Residues 943–962 (SPQSSTRKSASFSVKNQRTP) show a composition bias toward polar residues. Phosphothreonine is present on residues T970, T975, and T977. Phosphoserine occurs at positions 981 and 992. Over residues 1011–1028 (EPQKEPKQKEEIKKEPSE) the composition is skewed to basic and acidic residues. Pro residues predominate over residues 1077–1089 (TEPPPKPVFPPTA). Composition is skewed to basic and acidic residues over residues 1104–1124 (KPPEKADVSVEKLDGESDKEQ) and 1163–1224 (KETQ…DTVI). Position 1120 is a phosphoserine (S1120). Positions 1138–1210 (KDDQKAENDM…REFIRQEYMR (73 aa)) form a coiled coil. The span at 1259–1271 (SSLSLASLNTGDS) shows a compositional bias: polar residues. Residues S1285, S1291, and S1293 each carry the phosphoserine modification. Positions 1306–1318 (NASTTSSVASGTE) are enriched in polar residues. One can recognise a CKK domain in the interval 1321–1455 (GPKLYKEPSA…QTKRPVTPKK (135 aa)).

Belongs to the CAMSAP1 family. In terms of assembly, interacts with CAMSAP3. Interacts with KATNA1 and KATNB1; leading to regulate the length of CAMSAP2-decorated microtubule stretches. Interacts with a complex formed by AKAP9 and PDE4DIP isoform 2/MMG8/SMYLE, which recruits CAMSAP2 to the Golgi. Interacts with MAPRE1/EB1.

The protein resides in the cytoplasm. The protein localises to the cytoskeleton. It is found in the golgi apparatus. It localises to the cilium basal body. Functionally, key microtubule-organizing protein that specifically binds the minus-end of non-centrosomal microtubules and regulates their dynamics and organization. Specifically recognizes growing microtubule minus-ends and autonomously decorates and stabilizes microtubule lattice formed by microtubule minus-end polymerization. Acts on free microtubule minus-ends that are not capped by microtubule-nucleating proteins or other factors and protects microtubule minus-ends from depolymerization. In addition, it also reduces the velocity of microtubule polymerization. Through the microtubule cytoskeleton, also regulates the organization of cellular organelles including the Golgi and the early endosomes. Essential for the tethering, but not for nucleation of non-centrosomal microtubules at the Golgi: together with Golgi-associated proteins AKAP9 and PDE4DIP, required to tether non-centrosomal minus-end microtubules to the Golgi, an important step for polarized cell movement. Also acts as a regulator of neuronal polarity and development: localizes to non-centrosomal microtubule minus-ends in neurons and stabilizes non-centrosomal microtubules, which is required for neuronal polarity, axon specification and dendritic branch formation. Through the microtubule cytoskeleton, regulates the autophagosome transport. In Mus musculus (Mouse), this protein is Calmodulin-regulated spectrin-associated protein 2.